A 213-amino-acid polypeptide reads, in one-letter code: Large ribosomal subunit protein uL1 (213 aa).

The protein belongs to the universal ribosomal protein uL1 family. As to quaternary structure, part of the 50S ribosomal subunit.

In terms of biological role, binds directly to 23S rRNA. Probably involved in E site tRNA release. Functionally, protein L1 is also a translational repressor protein, it controls the translation of its operon by binding to its mRNA. The sequence is that of Large ribosomal subunit protein uL1 from Methanocorpusculum labreanum (strain ATCC 43576 / DSM 4855 / Z).